The sequence spans 89 residues: Small ribosomal subunit protein uS15 (89 aa).

Belongs to the universal ribosomal protein uS15 family. In terms of assembly, part of the 30S ribosomal subunit. Forms a bridge to the 50S subunit in the 70S ribosome, contacting the 23S rRNA.

Functionally, one of the primary rRNA binding proteins, it binds directly to 16S rRNA where it helps nucleate assembly of the platform of the 30S subunit by binding and bridging several RNA helices of the 16S rRNA. Forms an intersubunit bridge (bridge B4) with the 23S rRNA of the 50S subunit in the ribosome. The polypeptide is Small ribosomal subunit protein uS15 (Photorhabdus laumondii subsp. laumondii (strain DSM 15139 / CIP 105565 / TT01) (Photorhabdus luminescens subsp. laumondii)).